Consider the following 142-residue polypeptide: Complexin (142 aa).

Disordered stretches follow at residues 13-70 and 83-105; these read QLSA…MRQD and IVEAAPQEEPNPLMRKKKTPEEL. Positions 29-138 form a coiled coil; that stretch reads GDDKEKAEEE…NELKTQIEGK (110 aa). A compositionally biased stretch (basic and acidic residues) spans 31–70; that stretch reads DKEKAEEEERERQEAIKEAEDRRKEKHRKMEEEREKMRQD. Cys139 bears the Cysteine methyl ester mark. Cys139 carries the S-farnesyl cysteine lipid modification. A propeptide spans 140–142 (removed in mature form); the sequence is VMQ.

It belongs to the complexin/synaphin family. Binds to the SNARE core complex containing Snap25, synaptobrevin and Syx1A.

The protein resides in the membrane. In terms of biological role, positively regulates a late step in synaptic vesicle exocytosis. This is Complexin (cpx) from Drosophila melanogaster (Fruit fly).